The primary structure comprises 444 residues: U-box domain-containing protein 31 (444 aa).

The region spanning E59–L133 is the U-box domain. ARM repeat units lie at residues K301–L340 and E343–K382.

It catalyses the reaction S-ubiquitinyl-[E2 ubiquitin-conjugating enzyme]-L-cysteine + [acceptor protein]-L-lysine = [E2 ubiquitin-conjugating enzyme]-L-cysteine + N(6)-ubiquitinyl-[acceptor protein]-L-lysine.. It participates in protein modification; protein ubiquitination. Its function is as follows. Functions as an E3 ubiquitin ligase. This is U-box domain-containing protein 31 (PUB31) from Arabidopsis thaliana (Mouse-ear cress).